The sequence spans 201 residues: Protein OPI10 homolog (201 aa).

This sequence belongs to the OPI10 family.

This is Protein OPI10 homolog from Anopheles gambiae (African malaria mosquito).